The sequence spans 218 residues: Flagellin B1 (218 aa).

Positions 1–12 (MNIKEFLSNKKG) are excised as a propeptide. Asn-38, Asn-71, Asn-77, Asn-115, and Asn-136 each carry an N-linked (GlcNAc...) asparagine glycan.

It belongs to the archaeal flagellin family. In terms of processing, N-linked glycans consist of the 779 Da trisaccharide beta-ManNAc(Thr)-(1-4)-beta-GlcNAc3NAcA-(1-3)-beta-GlcNAc.

It localises to the archaeal flagellum. Functionally, flagellin is the subunit protein which polymerizes to form the filaments of archaeal flagella. In Methanococcus voltae, this protein is Flagellin B1 (flaB1).